Consider the following 294-residue polypeptide: ATP synthase gamma chain (294 aa).

Belongs to the ATPase gamma chain family. F-type ATPases have 2 components, CF(1) - the catalytic core - and CF(0) - the membrane proton channel. CF(1) has five subunits: alpha(3), beta(3), gamma(1), delta(1), epsilon(1). CF(0) has three main subunits: a, b and c.

It is found in the cell inner membrane. In terms of biological role, produces ATP from ADP in the presence of a proton gradient across the membrane. The gamma chain is believed to be important in regulating ATPase activity and the flow of protons through the CF(0) complex. This is ATP synthase gamma chain from Paraburkholderia phytofirmans (strain DSM 17436 / LMG 22146 / PsJN) (Burkholderia phytofirmans).